Reading from the N-terminus, the 104-residue chain is ATP-dependent Clp protease adapter protein ClpS (104 aa).

The segment at 1-20 (MSPDPHEDLGDVLTEPTQKT) is disordered.

Belongs to the ClpS family. As to quaternary structure, binds to the N-terminal domain of the chaperone ClpA.

In terms of biological role, involved in the modulation of the specificity of the ClpAP-mediated ATP-dependent protein degradation. The polypeptide is ATP-dependent Clp protease adapter protein ClpS (Desulfatibacillum aliphaticivorans).